A 150-amino-acid polypeptide reads, in one-letter code: Large ribosomal subunit protein uL16 (150 aa).

It belongs to the universal ribosomal protein uL16 family. Component of the small ribosomal subunit. Mature ribosomes consist of a small (40S) and a large (60S) subunit. The 40S subunit contains about 33 different proteins and 1 molecule of RNA (18S). The 60S subunit contains about 49 different proteins and 3 molecules of RNA (25S, 5.8S and 5S).

The protein is Large ribosomal subunit protein uL16 (RPL10) of Nicotiana tabacum (Common tobacco).